Consider the following 554-residue polypeptide: Malate synthase 1 (554 aa).

Arginine 177 serves as the catalytic Proton acceptor. Residue aspartate 457 is the Proton donor of the active site. An SKL peroxisome targeting motif motif is present at residues 552 to 554; sequence SKL.

It belongs to the malate synthase family. In terms of assembly, interacts with PEX9.

It is found in the peroxisome matrix. It carries out the reaction glyoxylate + acetyl-CoA + H2O = (S)-malate + CoA + H(+). Its pathway is carbohydrate metabolism; glyoxylate cycle; (S)-malate from isocitrate: step 2/2. Its function is as follows. Malate synthase which takes part in the glyoxylate cycle. MLS1 activity is essential for cells to grow on oleic acid as a sole carbon source. Two steps of the glyoxylate cycle take place in the cytosol, the splitting of isocitrate into succinate and glyoxylate, and the dehydrogenation of malate to oxaloacetate. However, the formation of malate from glyoxylate and acetyl-CoA undertaken MLS1, occurs in the peroxisomes when cells are grown on oleic acid. The source of acetyl-CoA being either peroxisomal when breaking down fatty acids, or cytosolic when extra-cellular two-carbon substrates are used, therefore, although not strictly essential, the peroxisomal localization of MLS1 appears to be advantageous for cells growing on oleic acid, in that acetyl-CoA production and utilization are thereby intimately compartmentalized together to increase efficiency. This chain is Malate synthase 1, found in Saccharomyces cerevisiae (strain ATCC 204508 / S288c) (Baker's yeast).